The chain runs to 23 residues: Hemocyanin subunit 4 (23 aa).

It belongs to the tyrosinase family. Hemocyanin subfamily. Hemolymph.

The protein resides in the secreted. Its subcellular location is the extracellular space. Functionally, hemocyanins are copper-containing oxygen carriers occurring freely dissolved in the hemolymph of many mollusks and arthropods. This chain is Hemocyanin subunit 4, found in Carcinus maenas (Common shore crab).